A 132-amino-acid polypeptide reads, in one-letter code: Cytochrome B5 isoform C (132 aa).

The Cytochrome b5 heme-binding domain maps to 2-78 (ANLISFHDVA…MKKYCIGDVD (77 aa)). Positions 37 and 61 each coordinate heme. The helical transmembrane segment at 110–129 (LLIYLIPLLILGVAFALRFY) threads the bilayer.

It belongs to the cytochrome b5 family. In terms of assembly, interacts with CER1, BI-1, FAH1 and FAH2.

It localises to the endoplasmic reticulum membrane. Membrane bound hemoprotein which function as an electron carrier for several membrane bound oxygenases, including fatty acid desaturases. The polypeptide is Cytochrome B5 isoform C (Arabidopsis thaliana (Mouse-ear cress)).